Reading from the N-terminus, the 433-residue chain is Glycerol-3-phosphate dehydrogenase [NAD(+)] (433 aa).

NAD(+)-binding positions include 17-22 (GSGNWG), phenylalanine 49, and phenylalanine 117. Lysine 140 provides a ligand contact to substrate. Residue alanine 173 coordinates NAD(+). Residues 187–246 (IAYDPPPIDSSRAATPRDRSPNYDSTSANKLPDLTVTSADSNGKDDRGRRTKAKLTPVPE) form a disordered region. The span at 208–227 (NYDSTSANKLPDLTVTSADS) shows a compositional bias: polar residues. The Proton acceptor role is filled by lysine 283. Arginine 349 and glutamine 378 together coordinate NAD(+). Position 349–350 (349–350 (RN)) interacts with substrate.

It belongs to the NAD-dependent glycerol-3-phosphate dehydrogenase family.

It carries out the reaction sn-glycerol 3-phosphate + NAD(+) = dihydroxyacetone phosphate + NADH + H(+). The polypeptide is Glycerol-3-phosphate dehydrogenase [NAD(+)] (Pyricularia oryzae (strain Y34) (Rice blast fungus)).